The sequence spans 375 residues: Period circadian protein (375 aa).

Disordered stretches follow at residues 28–118, 140–189, and 220–254; these read TAPV…AVTP, KHRE…WEGE, and CQAS…NQYA. A compositionally biased stretch (low complexity) spans 69-91; sequence SGNFTTGSNLHMSSVTNTSNAGT. The segment covering 92-113 has biased composition (gly residues); the sequence is GTSGTGNSGGGGGGGGGGGPGN. Over residues 145–156 the composition is skewed to basic and acidic residues; that stretch reads RGRSGEKNKKSA. Residues 224–243 show a composition bias toward gly residues; sequence GAGGGGSGSVGGTGNIGSGG. Positions 245–254 are enriched in polar residues; it reads NAQPSTNQYA.

As to quaternary structure, forms a heterodimer with timeless (TIM); the complex then translocates into the nucleus. Post-translationally, phosphorylated with a circadian rhythmicity, probably by the double-time protein (dbt). Phosphorylation could be implicated in the stability of per monomer and in the formation of heterodimer per-tim.

The protein resides in the nucleus. Its subcellular location is the cytoplasm. The protein localises to the perinuclear region. In terms of biological role, essential for biological clock functions. Determines the period length of circadian and ultradian rhythms; an increase in PER dosage leads to shortened circadian rhythms and a decrease leads to lengthened circadian rhythms. Essential for the circadian rhythmicity of locomotor activity, eclosion behavior, and for the rhythmic component of the male courtship song that originates in the thoracic nervous system. The biological cycle depends on the rhythmic formation and nuclear localization of the TIM-PER complex. Light induces the degradation of TIM, which promotes elimination of PER. Nuclear activity of the heterodimer coordinatively regulates PER and TIM transcription through a negative feedback loop. Behaves as a negative element in circadian transcriptional loop. Does not appear to bind DNA, suggesting indirect transcriptional inhibition. The protein is Period circadian protein (per) of Drosophila capricorni (Fruit fly).